Here is a 1001-residue protein sequence, read N- to C-terminus: Sarcoplasmic/endoplasmic reticulum calcium ATPase 1 (1001 aa).

Residues 1-48 (MEAAHSKSTEECLAYFGVSETTGLTPDQVKRHLEKYGHNELPAEEGKS) lie on the Cytoplasmic side of the membrane. The helical transmembrane segment at 49 to 69 (LWELVIEQFEDLLVRILLLAA) threads the bilayer. The Lumenal portion of the chain corresponds to 70 to 89 (CISFVLAWFEEGEETITAFV). Residues 90–110 (EPFVILLILIANAIVGVWQER) form a helical membrane-spanning segment. Residues 111–253 (NAENAIEALK…QDKTPLQQKL (143 aa)) are Cytoplasmic-facing. A helical membrane pass occupies residues 254–273 (DEFGEQLSKVISLICVAVWL). Residues 274–295 (INIGHFNDPVHGGSWIRGAIYY) lie on the Lumenal side of the membrane. A helical transmembrane segment spans residues 296–313 (FKIAVALAVAAIPEGLPA). Residues V304, A305, I307, and E309 each coordinate Ca(2+). Residues 314–757 (VITTCLALGT…EEGRAIYNNM (444 aa)) are Cytoplasmic-facing. D351 serves as the catalytic 4-aspartylphosphate intermediate. D351 and T353 together coordinate Mg(2+). ATP is bound at residue T353. Position 441 is a phosphothreonine (T441). ATP-binding residues include E442, R489, K515, and R560. T569 carries the post-translational modification Phosphothreonine. A Phosphoserine modification is found at S581. ATP is bound by residues T625, G626, D627, R678, and K684. Residue D703 participates in Mg(2+) binding. N706 is a binding site for ATP. Residues 758–777 (KQFIRYLISSNVGEVVCIFL) form a helical membrane-spanning segment. The Ca(2+) site is built by N768 and E771. At 778–787 (TAALGLPEAL) the chain is on the lumenal side. The chain crosses the membrane as a helical span at residues 788 to 808 (IPVQLLWVNLVTDGLPATALG). The interval 788-808 (IPVQLLWVNLVTDGLPATALG) is interaction with PLN. Ca(2+) is bound by residues N796, T799, and D800. Over 809 to 828 (FNPPDLDIMDRPPRSPKEPL) the chain is Cytoplasmic. A helical membrane pass occupies residues 829-851 (ISGWLFFRYMAIGGYVGAATVGA). The Lumenal segment spans residues 852-897 (AAWWFMYAEDGPGVTYHQLTHFMQCTEDHPHFEGLDCEIFEAPEPM). A disulfide bridge links C876 with C888. Residues 898–917 (TMALSVLVTIEMCNALNSLS) form a helical membrane-spanning segment. E908 is a Ca(2+) binding site. Topologically, residues 918-930 (ENQSLMRMPPWVN) are cytoplasmic. A helical membrane pass occupies residues 931–949 (IWLLGSICLSMSLHFLILY). An interaction with PLN region spans residues 932-943 (WLLGSICLSMSL). Residues 950–964 (VDPLPMIFKLKALDL) lie on the Lumenal side of the membrane. A helical transmembrane segment spans residues 965-985 (TQWLMVLKISLPVIGLDEILK). Over 986–1001 (FIARNYLEDPEDERRK) the chain is Cytoplasmic.

Belongs to the cation transport ATPase (P-type) (TC 3.A.3) family. Type IIA subfamily. Interacts with sarcolipin (SLN). Interacts with phospholamban (PLN). Interacts with myoregulin (MRLN). Interacts with DWORF. Interacts with VMP1. It depends on Mg(2+) as a cofactor. In terms of tissue distribution, skeletal muscle (at protein level). Skeletal muscle, fast twitch muscle (type II) fibers.

It localises to the endoplasmic reticulum membrane. Its subcellular location is the sarcoplasmic reticulum membrane. The enzyme catalyses Ca(2+)(in) + ATP + H2O = Ca(2+)(out) + ADP + phosphate + H(+). Inhibited by sarcolipin (SLN) and myoregulin (MRLN). Has also been shown to be reversibly inhibited by phospholamban (PLN) at low calcium concentrations in vitro. Dephosphorylated PLN decreases the apparent affinity of the ATPase for calcium and this inhibition is regulated by the phosphorylation of PLN in vitro. Enhanced by DWORF; DWORF increases activity by displacing sarcolipin (SLN), phospholamban (PLN) and myoregulin (MRLN). Functionally, key regulator of striated muscle performance by acting as the major Ca(2+) ATPase responsible for the reuptake of cytosolic Ca(2+) into the sarcoplasmic reticulum. Catalyzes the hydrolysis of ATP coupled with the translocation of calcium from the cytosol to the sarcoplasmic reticulum lumen. Contributes to calcium sequestration involved in muscular excitation/contraction. The sequence is that of Sarcoplasmic/endoplasmic reticulum calcium ATPase 1 (ATP2A1) from Oryctolagus cuniculus (Rabbit).